Consider the following 602-residue polypeptide: VIN3-like protein 1 (602 aa).

The disordered stretch occupies residues 1-38 (MDSSSTKSKISHSRKTNKKSNKKHESNGKQQQQQDVDG). Positions 9–22 (KISHSRKTNKKSNK) are enriched in basic residues. Residues 67 to 137 (RCSCCVCHNF…CFCCYSCGKV (71 aa)) form a PHD-type zinc finger. The Nuclear localization signal motif lies at 144 to 151 (WKKQLVAA). The 99-residue stretch at 242-340 (VPAACRFHFE…AMCFTKSVEI (99 aa)) folds into the Fibronectin type-III domain. Residues 430–470 (LNEEFTPPDSSGGEDNGVPLNSLAEADGGDHDDNCDDAVSN) are disordered. A VIN3-Interacting Domain (VID) region spans residues 502-602 (AISDSNDSEN…RPNNGVMTSH (101 aa)).

Interacts with VIN3 and VIL2. The heterodimer made of VIN3 and VIL1 is required for establishing the vernalization-induced epigenetic silencing of FLC. Component of the plant homeodomain / polycomb repressive complex 2 (PHD-PRC2) large complex during prolonged cold, composed of core PRC2 components (VRN2, EZA1, FIE and MSI1), and three related PHD finger proteins (VIL1, VIL2 and VIN3) that mediates histone H3 trimethylation on 'Lys-27' (H3K27me3). In terms of tissue distribution, accumulates in shoot and root apices, and in leaves.

Its subcellular location is the nucleus. The protein localises to the nucleus speckle. Its function is as follows. Involved in both the vernalization and photoperiod pathways by regulating expression of the related floral repressors FLOWERING LOCUS C (FLC) and FLOWERING LOCUS M (FLM). Together with VIN3, required during vernalization for the modifications of FLC and FLM chromatin that are associated with an epigenetically silenced state (e.g. chromatin modifications, histone deacetylation, and trimethylated H3 'Lys-4' H3K4me3 and 'Lys-27' H3K27me3) and with acquisition of competence to flower. Promotes flowering in short days (SD=8 hours light/16 hours dark). Associates dynamically at FLC locus; during vernalization, binds to specific sites, but when in warm conditions, distributed along the whole locus. In Arabidopsis thaliana (Mouse-ear cress), this protein is VIN3-like protein 1 (VIL1).